Reading from the N-terminus, the 629-residue chain is MFYPDPFDVIIIGGGHAGTEAAMAAARMGQQTLLLTHNIDTLGQMSCNPAIGGIGKGHLVKEVDALGGLMAKAIDQAGIQFRILNASKGPAVRATRAQADRVLYRQAVRTALENQPNLMIFQQAVEDLIVENDRVVGAVTQMGLKFRAKAVVLTVGTFLDGKIHIGLDNYSGGRAGDPPSIPLSRRLRELPLRVGRLKTGTPPRIDARTIDFSVLAQQHGDNPMPVFSFMGNASQHPQQVPCYITHTNEKTHDVIRSNLDRSPMYAGVIEGVGPRYCPSIEDKVMRFAERNQHQIFLEPEGLTSNEIYPNGISTSLPFDVQMQIVRSMQGMENAKIVRPGYAIEYDFFDPRDLKPTLESKFIQGLFFAGQINGTTGYEEAAAQGLLAGLNAARLSADKEGWAPARSQAYLGVLVDDLCTLGTKEPYRMFTSRAEYRLMLREDNADLRLTEIGRELGLVDDERWARFNEKLENIERERQRLKSTWVTPSAEAAAEVNAHLTAPLSREASGEDLLRRPEMTYEKLTTLTPFAPALTDEQAAEQVEIQVKYEGYIARQQDEIEKQLRNENTLLPATLDYRQVSGLSNEVIAKLNDHKPASIGQASRISGVTPAAISILLVWLKKQGMLRRSA.

FAD is bound by residues 13 to 18, Val125, and Ser180; that span reads GGGHAG. Position 273–287 (273–287) interacts with NAD(+); the sequence is GPRYCPSIEDKVMRF. Gln370 serves as a coordination point for FAD.

This sequence belongs to the MnmG family. As to quaternary structure, homodimer. Heterotetramer of two MnmE and two MnmG subunits. It depends on FAD as a cofactor.

The protein localises to the cytoplasm. In terms of biological role, NAD-binding protein involved in the addition of a carboxymethylaminomethyl (cmnm) group at the wobble position (U34) of certain tRNAs, forming tRNA-cmnm(5)s(2)U34. The sequence is that of tRNA uridine 5-carboxymethylaminomethyl modification enzyme MnmG from Escherichia coli O45:K1 (strain S88 / ExPEC).